A 624-amino-acid polypeptide reads, in one-letter code: Mannosyl-oligosaccharide 1,2-alpha-mannosidase MNS3 (624 aa).

The Cytoplasmic segment spans residues M1–S43. A helical; Signal-anchor for type II membrane protein transmembrane segment spans residues C44–M64. The Lumenal portion of the chain corresponds to S65–T624. 2 N-linked (GlcNAc...) asparagine glycosylation sites follow: N69 and N114. Positions L91–P123 are disordered. Over residues G110–S121 the composition is skewed to low complexity. E212 serves as the catalytic Proton donor. N236 carries N-linked (GlcNAc...) asparagine glycosylation. Residue D357 is part of the active site. A glycan (N-linked (GlcNAc...) asparagine) is linked at N377. A disulfide bond links C428 and C471. E485 serves as the catalytic Proton donor. N503 is a glycosylation site (N-linked (GlcNAc...) asparagine). E526 is an active-site residue. T613 provides a ligand contact to Ca(2+).

It belongs to the glycosyl hydrolase 47 family. The cofactor is Ca(2+). Mn(2+) serves as cofactor. Requires Mg(2+) as cofactor. As to expression, expressed in flowers, siliques, stems, leaves, roots, stamens and sepals.

Its subcellular location is the golgi apparatus. It localises to the cis-Golgi network membrane. It carries out the reaction N(4)-(alpha-D-Man-(1-&gt;2)-alpha-D-Man-(1-&gt;2)-alpha-D-Man-(1-&gt;3)-[alpha-D-Man-(1-&gt;2)-alpha-D-Man-(1-&gt;3)-[alpha-D-Man-(1-&gt;2)-alpha-D-Man-(1-&gt;6)]-alpha-D-Man-(1-&gt;6)]-beta-D-Man-(1-&gt;4)-beta-D-GlcNAc-(1-&gt;4)-beta-D-GlcNAc)-L-asparaginyl-[protein] (N-glucan mannose isomer 9A1,2,3B1,2,3) + 4 H2O = N(4)-(alpha-D-Man-(1-&gt;3)-[alpha-D-Man-(1-&gt;3)-[alpha-D-Man-(1-&gt;6)]-alpha-D-Man-(1-&gt;6)]-beta-D-Man-(1-&gt;4)-beta-D-GlcNAc-(1-&gt;4)-beta-D-GlcNAc)-L-asparaginyl-[protein] (N-glucan mannose isomer 5A1,2) + 4 beta-D-mannose. It catalyses the reaction N(4)-(alpha-D-Man-(1-&gt;2)-alpha-D-Man-(1-&gt;2)-alpha-D-Man-(1-&gt;3)-[alpha-D-Man-(1-&gt;3)-[alpha-D-Man-(1-&gt;2)-alpha-D-Man-(1-&gt;6)]-alpha-D-Man-(1-&gt;6)]-beta-D-Man-(1-&gt;4)-beta-D-GlcNAc-(1-&gt;4)-beta-D-GlcNAc)-L-asparaginyl-[protein] (N-glucan mannose isomer 8A1,2,3B1,3) + 3 H2O = N(4)-(alpha-D-Man-(1-&gt;3)-[alpha-D-Man-(1-&gt;3)-[alpha-D-Man-(1-&gt;6)]-alpha-D-Man-(1-&gt;6)]-beta-D-Man-(1-&gt;4)-beta-D-GlcNAc-(1-&gt;4)-beta-D-GlcNAc)-L-asparaginyl-[protein] (N-glucan mannose isomer 5A1,2) + 3 beta-D-mannose. The catalysed reaction is N(4)-(alpha-D-Man-(1-&gt;2)-alpha-D-Man-(1-&gt;2)-alpha-D-Man-(1-&gt;3)-[alpha-D-Man-(1-&gt;2)-alpha-D-Man-(1-&gt;3)-[alpha-D-Man-(1-&gt;2)-alpha-D-Man-(1-&gt;6)]-alpha-D-Man-(1-&gt;6)]-beta-D-Man-(1-&gt;4)-beta-D-GlcNAc-(1-&gt;4)-beta-D-GlcNAc)-L-asparaginyl-[protein] (N-glucan mannose isomer 9A1,2,3B1,2,3) + H2O = N(4)-(alpha-D-Man-(1-&gt;2)-alpha-D-Man-(1-&gt;2)-alpha-D-Man-(1-&gt;3)-[alpha-D-Man-(1-&gt;3)-[alpha-D-Man-(1-&gt;2)-alpha-D-Man-(1-&gt;6)]-alpha-D-Man-(1-&gt;6)]-beta-D-Man-(1-&gt;4)-beta-D-GlcNAc-(1-&gt;4)-beta-D-GlcNAc)-L-asparaginyl-[protein] (N-glucan mannose isomer 8A1,2,3B1,3) + beta-D-mannose. It functions in the pathway protein modification; protein glycosylation. Its activity is regulated as follows. Inhibited by kifunensine and 1-deoxymannojirimycin, but not by swainsonine. In terms of biological role, class I alpha-mannosidase essential for early N-glycan processing. Removes preferentially alpha-1,2-linked mannose residues from Man(9)GlcNAc(2) to produce Man(8)GlcNAc(2). Involved in root development and cell wall biosynthesis. The polypeptide is Mannosyl-oligosaccharide 1,2-alpha-mannosidase MNS3 (MNS3) (Arabidopsis thaliana (Mouse-ear cress)).